Reading from the N-terminus, the 404-residue chain is NADH-quinone oxidoreductase subunit D (404 aa).

Belongs to the complex I 49 kDa subunit family. NDH-1 is composed of 14 different subunits. Subunits NuoB, C, D, E, F, and G constitute the peripheral sector of the complex.

It is found in the cell inner membrane. The catalysed reaction is a quinone + NADH + 5 H(+)(in) = a quinol + NAD(+) + 4 H(+)(out). NDH-1 shuttles electrons from NADH, via FMN and iron-sulfur (Fe-S) centers, to quinones in the respiratory chain. The immediate electron acceptor for the enzyme in this species is believed to be ubiquinone. Couples the redox reaction to proton translocation (for every two electrons transferred, four hydrogen ions are translocated across the cytoplasmic membrane), and thus conserves the redox energy in a proton gradient. This chain is NADH-quinone oxidoreductase subunit D, found in Dinoroseobacter shibae (strain DSM 16493 / NCIMB 14021 / DFL 12).